Consider the following 964-residue polypeptide: Protein translocase subunit SecA (964 aa).

ATP is bound by residues Gln86, 104–108 (GEGKT), and Asp494. The tract at residues 848 to 964 (AESADTIAVA…YKMCHGQNEK (117 aa)) is disordered. A compositionally biased stretch (acidic residues) spans 871–882 (AEGEVEEEDEDT). Positions 889 to 900 (AESAAASGAGES) are enriched in low complexity. Residues Cys947, Cys949, Cys958, and His959 each coordinate Zn(2+).

The protein belongs to the SecA family. As to quaternary structure, monomer and homodimer. Part of the essential Sec protein translocation apparatus which comprises SecA, SecYEG and auxiliary proteins SecDF. Other proteins may also be involved. Zn(2+) is required as a cofactor.

Its subcellular location is the cell membrane. The protein resides in the cytoplasm. The catalysed reaction is ATP + H2O + cellular proteinSide 1 = ADP + phosphate + cellular proteinSide 2.. Its function is as follows. Part of the Sec protein translocase complex. Interacts with the SecYEG preprotein conducting channel. Has a central role in coupling the hydrolysis of ATP to the transfer of proteins into and across the cell membrane, serving as an ATP-driven molecular motor driving the stepwise translocation of polypeptide chains across the membrane. The protein is Protein translocase subunit SecA of Bifidobacterium longum (strain NCC 2705).